A 316-amino-acid chain; its full sequence is Peroxidase 67 (316 aa).

A signal peptide spans 1–19 (MLKVVLLMMIMMLASQSEA). At glutamine 20 the chain carries Pyrrolidone carboxylic acid. 4 disulfides stabilise this stretch: cysteine 30–cysteine 110, cysteine 63–cysteine 68, cysteine 116–cysteine 312, and cysteine 196–cysteine 221. Histidine 61 functions as the Proton acceptor in the catalytic mechanism. 5 residues coordinate Ca(2+): aspartate 62, valine 65, glycine 67, aspartate 69, and serine 71. Proline 159 is a substrate binding site. Heme b is bound at residue histidine 189. A Ca(2+)-binding site is contributed by threonine 190. A glycan (N-linked (GlcNAc...) asparagine) is linked at asparagine 205. Ca(2+) is bound by residues aspartate 236, serine 239, and aspartate 244.

It belongs to the peroxidase family. Classical plant (class III) peroxidase subfamily. The cofactor is heme b. Ca(2+) serves as cofactor.

It localises to the secreted. The catalysed reaction is 2 a phenolic donor + H2O2 = 2 a phenolic radical donor + 2 H2O. Functionally, removal of H(2)O(2), oxidation of toxic reductants, biosynthesis and degradation of lignin, suberization, auxin catabolism, response to environmental stresses such as wounding, pathogen attack and oxidative stress. These functions might be dependent on each isozyme/isoform in each plant tissue. The sequence is that of Peroxidase 67 (PER67) from Arabidopsis thaliana (Mouse-ear cress).